Consider the following 242-residue polypeptide: Type III pantothenate kinase (242 aa).

An ATP-binding site is contributed by 7–14 (DLGNSRFK). Substrate is bound by residues Tyr91 and 98-101 (GVDR). Catalysis depends on Asp100, which acts as the Proton acceptor. Thr121 provides a ligand contact to ATP. Thr171 provides a ligand contact to substrate.

Belongs to the type III pantothenate kinase family. As to quaternary structure, homodimer. NH4(+) serves as cofactor. The cofactor is K(+).

The protein localises to the cytoplasm. It carries out the reaction (R)-pantothenate + ATP = (R)-4'-phosphopantothenate + ADP + H(+). The protein operates within cofactor biosynthesis; coenzyme A biosynthesis; CoA from (R)-pantothenate: step 1/5. Its function is as follows. Catalyzes the phosphorylation of pantothenate (Pan), the first step in CoA biosynthesis. This is Type III pantothenate kinase from Xylella fastidiosa (strain 9a5c).